The chain runs to 316 residues: L-lactate dehydrogenase 3 (316 aa).

NAD(+)-binding residues include Val16, Asp37, Arg42, and Tyr68. Arg91 provides a ligand contact to substrate. NAD(+) contacts are provided by residues Ser104, 121-123 (ASN), and Thr146. 123–126 (NPVD) contacts substrate. Position 151-154 (151-154 (DSSR)) interacts with substrate. Beta-D-fructose 1,6-bisphosphate contacts are provided by Arg156 and His171. His178 acts as the Proton acceptor in catalysis. Thr233 serves as a coordination point for substrate.

This sequence belongs to the LDH/MDH superfamily. LDH family. As to quaternary structure, homotetramer.

The protein resides in the cytoplasm. The catalysed reaction is (S)-lactate + NAD(+) = pyruvate + NADH + H(+). The protein operates within fermentation; pyruvate fermentation to lactate; (S)-lactate from pyruvate: step 1/1. Allosterically activated by fructose 1,6-bisphosphate (FBP). Its function is as follows. Catalyzes the conversion of lactate to pyruvate. This is L-lactate dehydrogenase 3 from Bacillus thuringiensis subsp. konkukian (strain 97-27).